The sequence spans 315 residues: Methionyl-tRNA formyltransferase (315 aa).

113–116 (SLLP) is a binding site for (6S)-5,6,7,8-tetrahydrofolate.

It belongs to the Fmt family.

The catalysed reaction is L-methionyl-tRNA(fMet) + (6R)-10-formyltetrahydrofolate = N-formyl-L-methionyl-tRNA(fMet) + (6S)-5,6,7,8-tetrahydrofolate + H(+). Attaches a formyl group to the free amino group of methionyl-tRNA(fMet). The formyl group appears to play a dual role in the initiator identity of N-formylmethionyl-tRNA by promoting its recognition by IF2 and preventing the misappropriation of this tRNA by the elongation apparatus. The sequence is that of Methionyl-tRNA formyltransferase from Escherichia coli (strain SE11).